Reading from the N-terminus, the 683-residue chain is Sorting nexin MVP1 (683 aa).

Disordered stretches follow at residues 1–25 (MSRHHRPFTWGGAQPGASFSNPTSP) and 246–276 (LLAHNQGSSTDTFLAPDRTEARARQPNTRQE). A compositionally biased stretch (polar residues) spans 248 to 257 (AHNQGSSTDT). The region spanning 302 to 418 (PEDQVTVRLR…EVFFTEPRPI (117 aa)) is the PX domain. Residues Arg-338, Ser-340, Lys-364, and Arg-385 each coordinate a 1,2-diacyl-sn-glycero-3-phospho-(1D-myo-inositol-3-phosphate).

Belongs to the sorting nexin family.

It localises to the cytoplasm. Its subcellular location is the membrane. Required for vacuolar protein sorting. The protein is Sorting nexin MVP1 (MVP1) of Mycosarcoma maydis (Corn smut fungus).